The following is a 298-amino-acid chain: Ribose-phosphate pyrophosphokinase (298 aa).

ATP is bound by residues Asp33–Glu35 and Arg91–Gln92. The Mg(2+) site is built by His125 and Asp164. Residue Lys187 is part of the active site. Residues Arg189 and Asp224 each contribute to the D-ribose 5-phosphate site.

This sequence belongs to the ribose-phosphate pyrophosphokinase family. Class III (archaeal) subfamily. It depends on Mg(2+) as a cofactor.

Its subcellular location is the cytoplasm. It catalyses the reaction D-ribose 5-phosphate + ATP = 5-phospho-alpha-D-ribose 1-diphosphate + AMP + H(+). Its pathway is metabolic intermediate biosynthesis; 5-phospho-alpha-D-ribose 1-diphosphate biosynthesis; 5-phospho-alpha-D-ribose 1-diphosphate from D-ribose 5-phosphate (route I): step 1/1. In terms of biological role, involved in the biosynthesis of the central metabolite phospho-alpha-D-ribosyl-1-pyrophosphate (PRPP) via the transfer of pyrophosphoryl group from ATP to 1-hydroxyl of ribose-5-phosphate (Rib-5-P). This Methanobrevibacter smithii (strain ATCC 35061 / DSM 861 / OCM 144 / PS) protein is Ribose-phosphate pyrophosphokinase.